The sequence spans 168 residues: uncharacterized protein (168 aa).

The helical transmembrane segment at 23–47 (LFARASIIGVALLLSACATVPMASV) threads the bilayer.

It is found in the membrane. This is an uncharacterized protein from Haemophilus influenzae (strain ATCC 51907 / DSM 11121 / KW20 / Rd).